Reading from the N-terminus, the 397-residue chain is 3-hydroxy-3-methylglutaryl-coenzyme A reductase (397 aa).

Active-site charge relay system residues include Glu-96 and Asp-301. His-391 acts as the Proton donor in catalysis.

Belongs to the HMG-CoA reductase family.

The catalysed reaction is (R)-mevalonate + 2 NADP(+) + CoA = (3S)-3-hydroxy-3-methylglutaryl-CoA + 2 NADPH + 2 H(+). It functions in the pathway metabolic intermediate biosynthesis; (R)-mevalonate biosynthesis; (R)-mevalonate from acetyl-CoA: step 3/3. Functionally, converts HMG-CoA to mevalonate. The polypeptide is 3-hydroxy-3-methylglutaryl-coenzyme A reductase (hmgA) (Methanothermobacter thermautotrophicus (strain ATCC 29096 / DSM 1053 / JCM 10044 / NBRC 100330 / Delta H) (Methanobacterium thermoautotrophicum)).